The following is a 104-amino-acid chain: Co-chaperonin GroES 3 (104 aa).

Belongs to the GroES chaperonin family. As to quaternary structure, heptamer of 7 subunits arranged in a ring. Interacts with the chaperonin GroEL.

The protein localises to the cytoplasm. Its function is as follows. Together with the chaperonin GroEL, plays an essential role in assisting protein folding. The GroEL-GroES system forms a nano-cage that allows encapsulation of the non-native substrate proteins and provides a physical environment optimized to promote and accelerate protein folding. GroES binds to the apical surface of the GroEL ring, thereby capping the opening of the GroEL channel. This chain is Co-chaperonin GroES 3, found in Bradyrhizobium diazoefficiens (strain JCM 10833 / BCRC 13528 / IAM 13628 / NBRC 14792 / USDA 110).